The primary structure comprises 182 residues: ATP synthase subunit delta (182 aa).

The protein belongs to the ATPase delta chain family. In terms of assembly, F-type ATPases have 2 components, F(1) - the catalytic core - and F(0) - the membrane proton channel. F(1) has five subunits: alpha(3), beta(3), gamma(1), delta(1), epsilon(1). F(0) has three main subunits: a(1), b(2) and c(10-14). The alpha and beta chains form an alternating ring which encloses part of the gamma chain. F(1) is attached to F(0) by a central stalk formed by the gamma and epsilon chains, while a peripheral stalk is formed by the delta and b chains.

The protein resides in the cell inner membrane. Its function is as follows. F(1)F(0) ATP synthase produces ATP from ADP in the presence of a proton or sodium gradient. F-type ATPases consist of two structural domains, F(1) containing the extramembraneous catalytic core and F(0) containing the membrane proton channel, linked together by a central stalk and a peripheral stalk. During catalysis, ATP synthesis in the catalytic domain of F(1) is coupled via a rotary mechanism of the central stalk subunits to proton translocation. In terms of biological role, this protein is part of the stalk that links CF(0) to CF(1). It either transmits conformational changes from CF(0) to CF(1) or is implicated in proton conduction. The sequence is that of ATP synthase subunit delta from Pseudothermotoga lettingae (strain ATCC BAA-301 / DSM 14385 / NBRC 107922 / TMO) (Thermotoga lettingae).